The primary structure comprises 901 residues: Probable dipeptidyl-aminopeptidase B (901 aa).

The span at 1–22 (MSSPRPSTSSTSSDSGLSVDTT) shows a compositional bias: low complexity. The interval 1 to 67 (MSSPRPSTSS…EPFLPSAKKQ (67 aa)) is disordered. The Cytoplasmic segment spans residues 1–76 (MSSPRPSTSS…QAASGSRTSR (76 aa)). Residues 77–97 (LIWGLVILCVAGWLWGLVLFV) form a helical; Signal-anchor for type II membrane protein membrane-spanning segment. At 98-901 (TQNRSAQQSV…VKRSLPMLVK (804 aa)) the chain is on the vacuolar side. N-linked (GlcNAc...) asparagine glycosylation is found at Asn334 and Asn625. Residue Ser739 is the Charge relay system of the active site. An N-linked (GlcNAc...) asparagine glycan is attached at Asn793. Catalysis depends on charge relay system residues Asp816 and His849.

This sequence belongs to the peptidase S9B family.

Its subcellular location is the vacuole membrane. It carries out the reaction Release of an N-terminal dipeptide, Xaa-Yaa-|-Zaa-, from a polypeptide, preferentially when Yaa is Pro, provided Zaa is neither Pro nor hydroxyproline.. In terms of biological role, type IV dipeptidyl-peptidase which removes N-terminal dipeptides sequentially from polypeptides having unsubstituted N-termini provided that the penultimate residue is proline. In Aspergillus niger (strain ATCC MYA-4892 / CBS 513.88 / FGSC A1513), this protein is Probable dipeptidyl-aminopeptidase B (dapB).